A 246-amino-acid chain; its full sequence is tRNA (guanine-N(1)-)-methyltransferase (246 aa).

S-adenosyl-L-methionine is bound by residues Gly-117 and 137 to 142 (IGDYVL).

Belongs to the RNA methyltransferase TrmD family. As to quaternary structure, homodimer.

It localises to the cytoplasm. The enzyme catalyses guanosine(37) in tRNA + S-adenosyl-L-methionine = N(1)-methylguanosine(37) in tRNA + S-adenosyl-L-homocysteine + H(+). In terms of biological role, specifically methylates guanosine-37 in various tRNAs. This Acinetobacter baumannii (strain SDF) protein is tRNA (guanine-N(1)-)-methyltransferase.